The chain runs to 120 residues: PYEKIGAELVKEVAKKTDDVAGDGTTTATVLAQALVREGLRNVAAGANPLGLKRGIEKAVETVSENLLKSAKEVETKEQIAATAGISAGDTTIGDLIAEAMDKVGNEGVITVEESNTFGL.

23–27 (DGTTT) is a binding site for ATP.

Belongs to the chaperonin (HSP60) family. Forms a cylinder of 14 subunits composed of two heptameric rings stacked back-to-back. Interacts with the co-chaperonin GroES.

The protein localises to the cytoplasm. It catalyses the reaction ATP + H2O + a folded polypeptide = ADP + phosphate + an unfolded polypeptide.. Together with its co-chaperonin GroES, plays an essential role in assisting protein folding. The GroEL-GroES system forms a nano-cage that allows encapsulation of the non-native substrate proteins and provides a physical environment optimized to promote and accelerate protein folding. The protein is Chaperonin GroEL of Mycolicibacterium chitae (Mycobacterium chitae).